The following is a 316-amino-acid chain: Retinol dehydrogenase 12 (316 aa).

Position 46-52 (46-52) interacts with NADP(+); it reads GANTGIG. A substrate-binding site is contributed by Ser-175. Residue Tyr-200 is the Proton acceptor of the active site.

The protein belongs to the short-chain dehydrogenases/reductases (SDR) family. As to expression, widely expressed, mostly in retina, kidney, brain, skeletal muscle, pancreas and stomach.

The protein localises to the endoplasmic reticulum membrane. It catalyses the reaction all-trans-retinol + NADP(+) = all-trans-retinal + NADPH + H(+). The catalysed reaction is 11-cis-retinol + NADP(+) = 11-cis-retinal + NADPH + H(+). It carries out the reaction 9-cis-retinol + NADP(+) = 9-cis-retinal + NADPH + H(+). The enzyme catalyses a 4-hydroxynonen-1-ol + NADP(+) = a 4-hydroxynonenal + NADPH + H(+). It catalyses the reaction (E)-non-2-en-1-ol + NADP(+) = (E)-non-2-enal + NADPH + H(+). The catalysed reaction is (Z)-non-6-en-1-ol + NADP(+) = (Z)-non-6-enal + NADPH + H(+). It carries out the reaction nonan-1-ol + NADP(+) = nonanal + NADPH + H(+). It participates in cofactor metabolism; retinol metabolism. In terms of biological role, retinoids dehydrogenase/reductase with a clear preference for NADP. Displays high activity towards 9-cis, 11-cis and all-trans-retinal. Shows very weak activity towards 13-cis-retinol. Also exhibits activity, albeit with lower affinity than for retinaldehydes, towards lipid peroxidation products (C9 aldehydes) such as 4-hydroxynonenal and trans-2-nonenal. May play an important function in photoreceptor cells to detoxify 4-hydroxynonenal and potentially other toxic aldehyde products resulting from lipid peroxidation. Has no dehydrogenase activity towards steroids. The chain is Retinol dehydrogenase 12 (RDH12) from Homo sapiens (Human).